The sequence spans 514 residues: ATP synthase subunit alpha (514 aa).

170-177 is an ATP binding site; that stretch reads GDRQTGKT.

The protein belongs to the ATPase alpha/beta chains family. F-type ATPases have 2 components, CF(1) - the catalytic core - and CF(0) - the membrane proton channel. CF(1) has five subunits: alpha(3), beta(3), gamma(1), delta(1), epsilon(1). CF(0) has three main subunits: a(1), b(2) and c(9-12). The alpha and beta chains form an alternating ring which encloses part of the gamma chain. CF(1) is attached to CF(0) by a central stalk formed by the gamma and epsilon chains, while a peripheral stalk is formed by the delta and b chains.

It is found in the cell inner membrane. It catalyses the reaction ATP + H2O + 4 H(+)(in) = ADP + phosphate + 5 H(+)(out). Its function is as follows. Produces ATP from ADP in the presence of a proton gradient across the membrane. The alpha chain is a regulatory subunit. The polypeptide is ATP synthase subunit alpha (Acidithiobacillus ferrooxidans (strain ATCC 23270 / DSM 14882 / CIP 104768 / NCIMB 8455) (Ferrobacillus ferrooxidans (strain ATCC 23270))).